Consider the following 514-residue polypeptide: Alpha-amylase (514 aa).

The first 31 residues, Met-1–Ala-31, serve as a signal peptide directing secretion. Ca(2+)-binding residues include Asn-133, Asp-190, Ala-212, Asp-214, Asp-225, Asp-231, Asp-233, and Asp-235. Asp-190 lines the Na(+) pocket. Na(+) is bound by residues Asp-214, Asp-225, and Asp-231. Asp-262 acts as the Nucleophile in catalysis. His-266 lines the Ca(2+) pocket. Glu-292 (proton donor) is an active-site residue. Residues Gly-331, Asp-438, and Asp-461 each coordinate Ca(2+).

It belongs to the glycosyl hydrolase 13 family. Monomer. Ca(2+) serves as cofactor. Na(+) is required as a cofactor.

The protein resides in the secreted. It carries out the reaction Endohydrolysis of (1-&gt;4)-alpha-D-glucosidic linkages in polysaccharides containing three or more (1-&gt;4)-alpha-linked D-glucose units.. The chain is Alpha-amylase from Bacillus amyloliquefaciens (Bacillus velezensis).